Here is a 129-residue protein sequence, read N- to C-terminus: uncharacterized protein (129 aa).

The protein localises to the cytoplasm. Its subcellular location is the cytosol. It is found in the nucleus. This is an uncharacterized protein from Schizosaccharomyces pombe (strain 972 / ATCC 24843) (Fission yeast).